Here is a 163-residue protein sequence, read N- to C-terminus: Nucleotide-binding protein syc0675_c (163 aa).

Belongs to the YajQ family.

Its function is as follows. Nucleotide-binding protein. This chain is Nucleotide-binding protein syc0675_c, found in Synechococcus sp. (strain ATCC 27144 / PCC 6301 / SAUG 1402/1) (Anacystis nidulans).